Reading from the N-terminus, the 196-residue chain is uncharacterized protein (196 aa).

The HTH cro/C1-type domain occupies 12–66; the sequence is LRAAREAQKMSQRELSARSGLTQSHISQIERGTMEPGLGSLVDVARALDLEIVLA. Positions 23-42 form a DNA-binding region, H-T-H motif; it reads QRELSARSGLTQSHISQIER. The interval 174-196 is disordered; sequence VHRDRDDAVPRSAYALDEEDDNA.

This is an uncharacterized protein from Sinorhizobium fredii (strain NBRC 101917 / NGR234).